The sequence spans 60 residues: Metallothionein (60 aa).

The beta stretch occupies residues 1–28 (MDPCDCSKTGKCNCGGSCTCTNCSCTSC). Residues C4, C6, C12, C14, C18, C20, C23, C25, C28, C32, C33, C35, C36, C40, C43, C47, C49, C54, C58, and C59 each coordinate a divalent metal cation. Residues 29 to 60 (KKSCCACCPSGCTKCASGCVCKGKTCDTTCCQ) form an alpha region.

The protein belongs to the metallothionein superfamily. Type 1 family.

Functionally, metallothioneins have a high content of cysteine residues that bind various heavy metals. This is Metallothionein (mt) from Oryzias latipes (Japanese rice fish).